The primary structure comprises 275 residues: Formamidopyrimidine-DNA glycosylase (275 aa).

Residue Pro-2 is the Schiff-base intermediate with DNA of the active site. Residue Glu-3 is the Proton donor of the active site. Catalysis depends on Lys-59, which acts as the Proton donor; for beta-elimination activity. His-92, Arg-111, and Lys-155 together coordinate DNA. An FPG-type zinc finger spans residues 240–274; sequence YVYGQTGEPCRRCGHEIEKMKLGGRGTHYCPHCQQ. Arg-264 functions as the Proton donor; for delta-elimination activity in the catalytic mechanism.

It belongs to the FPG family. Monomer. The cofactor is Zn(2+).

The catalysed reaction is Hydrolysis of DNA containing ring-opened 7-methylguanine residues, releasing 2,6-diamino-4-hydroxy-5-(N-methyl)formamidopyrimidine.. The enzyme catalyses 2'-deoxyribonucleotide-(2'-deoxyribose 5'-phosphate)-2'-deoxyribonucleotide-DNA = a 3'-end 2'-deoxyribonucleotide-(2,3-dehydro-2,3-deoxyribose 5'-phosphate)-DNA + a 5'-end 5'-phospho-2'-deoxyribonucleoside-DNA + H(+). Functionally, involved in base excision repair of DNA damaged by oxidation or by mutagenic agents. Acts as a DNA glycosylase that recognizes and removes damaged bases. Has a preference for oxidized purines, such as 7,8-dihydro-8-oxoguanine (8-oxoG). Has AP (apurinic/apyrimidinic) lyase activity and introduces nicks in the DNA strand. Cleaves the DNA backbone by beta-delta elimination to generate a single-strand break at the site of the removed base with both 3'- and 5'-phosphates. The sequence is that of Formamidopyrimidine-DNA glycosylase from Exiguobacterium sp. (strain ATCC BAA-1283 / AT1b).